We begin with the raw amino-acid sequence, 361 residues long: Phospho-N-acetylmuramoyl-pentapeptide-transferase (361 aa).

The next 10 helical transmembrane spans lie at 25 to 45 (RGIL…PAVI), 73 to 93 (TMGG…WGDL), 98 to 118 (VWLV…DDWI), 139 to 159 (IFGL…AAIT), 168 to 188 (IALP…IVGF), 200 to 220 (GLAI…AYAS), 237 to 257 (AGEL…FLWF), 264 to 284 (VFMG…VAVI), 289 to 309 (LVLV…MIQV), and 339 to 359 (VIVR…ATLK).

Belongs to the glycosyltransferase 4 family. MraY subfamily. Mg(2+) serves as cofactor.

The protein resides in the cell inner membrane. The catalysed reaction is UDP-N-acetyl-alpha-D-muramoyl-L-alanyl-gamma-D-glutamyl-meso-2,6-diaminopimeloyl-D-alanyl-D-alanine + di-trans,octa-cis-undecaprenyl phosphate = di-trans,octa-cis-undecaprenyl diphospho-N-acetyl-alpha-D-muramoyl-L-alanyl-D-glutamyl-meso-2,6-diaminopimeloyl-D-alanyl-D-alanine + UMP. It participates in cell wall biogenesis; peptidoglycan biosynthesis. Catalyzes the initial step of the lipid cycle reactions in the biosynthesis of the cell wall peptidoglycan: transfers peptidoglycan precursor phospho-MurNAc-pentapeptide from UDP-MurNAc-pentapeptide onto the lipid carrier undecaprenyl phosphate, yielding undecaprenyl-pyrophosphoryl-MurNAc-pentapeptide, known as lipid I. The protein is Phospho-N-acetylmuramoyl-pentapeptide-transferase of Xanthomonas campestris pv. campestris (strain 8004).